A 697-amino-acid polypeptide reads, in one-letter code: Portal protein (697 aa).

Residues 633-697 (MSREAAGGVP…RRAGGPYGFH (65 aa)) form a disordered region. The span at 664–689 (ITADEERRGPERVGRFRNGGPDDPRR) shows a compositional bias: basic and acidic residues.

The protein belongs to the herpesviridae portal protein family. Homododecamerizes. Interacts with terminase subunits TRM1 and TRM3.

Its subcellular location is the virion. The protein localises to the host nucleus. Functionally, forms a portal in the viral capsid through which viral DNA is translocated during DNA packaging. Assembles as a dodecamer at a single fivefold axe of the T=16 icosahedric capsid. Binds to the molecular motor that translocates the viral DNA, termed terminase. This is Portal protein (UL104) from Homo sapiens (Human).